Consider the following 179-residue polypeptide: MKNRLGTWWVAILCMLLASHLSTVKARGIKHRFKWNRKVLPSSGGQITEARVAENRPGAFIKQGRKLDIDFGAEGNRYYAANYWQFPDGIYYEGCSEANVTKEMLVTSCVNATQAANQAEFSREKQDSKLHQRVLWRLIKEICSAKHCDFWLERGAALRVAVDQPAMVCLLGFVWFIVK.

The signal sequence occupies residues 1 to 25 (MKNRLGTWWVAILCMLLASHLSTVK). The segment at 27–50 (RGIKHRFKWNRKVLPSSGGQITEA) is flexible tail. Residues 51-155 (RVAENRPGAF…KHCDFWLERG (105 aa)) form a globular region. Cystine bridges form between Cys-95/Cys-148 and Cys-109/Cys-143. N-linked (GlcNAc...) asparagine glycosylation is found at Asn-99 and Asn-111. Residues 125-142 (KQDSKLHQRVLWRLIKEI) form a cu(2+) binding region. Gly-155 carries GPI-anchor amidated glycine lipidation. Residues 156-179 (AALRVAVDQPAMVCLLGFVWFIVK) constitute a propeptide, removed in mature form.

Belongs to the prion family. N-glycosylated. N-glycosylated at two distinct sites. Post-translationally, O-glycosylated. As to expression, detected in testis. Detected within seminiferous tubules, on round and elongated spermatids (at protein level). Not detected in brain (at protein level). Detected in testis, and at low levels in heart. Expression in brain is very low and barely detectable.

The protein localises to the cell membrane. Its function is as follows. Required for normal acrosome reaction and for normal male fertility. Can bind Cu(2+). This Mus musculus (Mouse) protein is Prion-like protein doppel (Prnd).